Here is a 142-residue protein sequence, read N- to C-terminus: Galectin-10 (142 aa).

S2 carries the post-translational modification N-acetylserine. The Galectin domain maps to 6-138 (VPYTEAASLS…DISLTKFNVS (133 aa)).

Interacts with CEL. In terms of tissue distribution, expressed abundantly in the bone marrow. Expressed exclusively by eosinophils and basophils. Not detected in monocytes and neutrophils. Expressed in CD25-positive regulatory T-cells (Treg) (at protein level). Found in intestinal tissue from patients with Celiac disease, expression is directly related to the histological grade of mucosal damage and to the number of eosinophils found in the duodenal lesion (at protein level). Found in sputum of patients with eosinophilic inflammatory diseases such as asthma (at protein level).

Its subcellular location is the cytoplasm. It is found in the cytosol. It localises to the cytoplasmic granule. Functionally, regulates immune responses through the recognition of cell-surface glycans. Essential for the anergy and suppressive function of CD25-positive regulatory T-cells (Treg). The chain is Galectin-10 (CLC) from Homo sapiens (Human).